Here is a 368-residue protein sequence, read N- to C-terminus: Probable dual-specificity RNA methyltransferase RlmN (368 aa).

Glutamate 100 functions as the Proton acceptor in the catalytic mechanism. The Radical SAM core domain maps to 106-344 (QHYGLSVCVT…CVVRQEHGTD (239 aa)). Cysteines 113 and 349 form a disulfide. [4Fe-4S] cluster-binding residues include cysteine 120, cysteine 124, and cysteine 127. S-adenosyl-L-methionine-binding positions include 172–173 (GE), serine 204, 227–229 (SLH), and asparagine 305. The active-site S-methylcysteine intermediate is cysteine 349.

The protein belongs to the radical SAM superfamily. RlmN family. Requires [4Fe-4S] cluster as cofactor.

The protein localises to the cytoplasm. It catalyses the reaction adenosine(2503) in 23S rRNA + 2 reduced [2Fe-2S]-[ferredoxin] + 2 S-adenosyl-L-methionine = 2-methyladenosine(2503) in 23S rRNA + 5'-deoxyadenosine + L-methionine + 2 oxidized [2Fe-2S]-[ferredoxin] + S-adenosyl-L-homocysteine. It carries out the reaction adenosine(37) in tRNA + 2 reduced [2Fe-2S]-[ferredoxin] + 2 S-adenosyl-L-methionine = 2-methyladenosine(37) in tRNA + 5'-deoxyadenosine + L-methionine + 2 oxidized [2Fe-2S]-[ferredoxin] + S-adenosyl-L-homocysteine. Specifically methylates position 2 of adenine 2503 in 23S rRNA and position 2 of adenine 37 in tRNAs. In Streptococcus agalactiae serotype Ia (strain ATCC 27591 / A909 / CDC SS700), this protein is Probable dual-specificity RNA methyltransferase RlmN.